Reading from the N-terminus, the 404-residue chain is Chorismate synthase (404 aa).

Residues R40 and R46 each coordinate NADP(+). Residues 135–137, 256–257, G300, 315–319, and R341 each bind FMN; these read RAS, QA, and KPIST.

It belongs to the chorismate synthase family. In terms of assembly, homotetramer. FMNH2 serves as cofactor.

The catalysed reaction is 5-O-(1-carboxyvinyl)-3-phosphoshikimate = chorismate + phosphate. The protein operates within metabolic intermediate biosynthesis; chorismate biosynthesis; chorismate from D-erythrose 4-phosphate and phosphoenolpyruvate: step 7/7. Functionally, catalyzes the anti-1,4-elimination of the C-3 phosphate and the C-6 proR hydrogen from 5-enolpyruvylshikimate-3-phosphate (EPSP) to yield chorismate, which is the branch point compound that serves as the starting substrate for the three terminal pathways of aromatic amino acid biosynthesis. This reaction introduces a second double bond into the aromatic ring system. In Mycobacterium sp. (strain JLS), this protein is Chorismate synthase.